The sequence spans 647 residues: MSDLYTIDPMLAKDAHIDRAHYKTLYHESIEQPEAFWNKVSQRLEWFKAPTKIKNVSYQLEDVHIRWFEDGELNASVNCLDRHLTLRGDKTALLFEPDAPDAPSSRITYRELYERVCQLGNALRHLGIEKGDRVTIYLPMIPDAVVAILACARIGAIHSVVFGGFAANSIADRVNDCGSKLIITADEGLRGGRKIPLKANVDAALKIHGTQSVETVLVVRHTGSTINMHTPRDRWFHDLVDIQATECAPERMNAEDSLFILYTSGSTGKPKGVLHTTGGYLVYTSYTHETVFDLRENDIYWCTADIGWITGHSYIVYGPLANGTTVLLFEGTPHYPTVSRFWEVIDKHHVTLFYTAPTAIRALMREGDTPVKKTSRKSLRLLGSVGEPINPEAWHWYYTIVGNGRCPIVDTWWQTETGGILITPLIGATDLKPGSVTLPFFGIRPALVDTNGQTLDGPAAGNLVLLDSWPGQMRTLYGDHQRFIDTYFRTYPNTYFTGDGCRRDADGYYWITGRVDDVINISGHRIGTAEIESTLVAHPKVAEAAVVGFPHPIKGQGIYAYVTLITGETPSEALHQELLTWVRKEIGAIAIPDHVQWASNLPKTRSGKIMRRILRKIAENAPDQLGDTSTLADPSIVDLLLNERLKH.

CoA-binding positions include 190–193 and threonine 310; that span reads RGGR. Residues 386 to 388, 410 to 415, aspartate 499, and arginine 514 contribute to the ATP site; these read GEP and DTWWQT. A CoA-binding site is contributed by serine 522. Arginine 525 is a binding site for ATP. Residues valine 536, histidine 538, and valine 541 each contribute to the Mg(2+) site. Arginine 583 contributes to the CoA binding site. Lysine 608 is subject to N6-acetyllysine.

This sequence belongs to the ATP-dependent AMP-binding enzyme family. It depends on Mg(2+) as a cofactor. Acetylated. Deacetylation by the SIR2-homolog deacetylase activates the enzyme.

It carries out the reaction acetate + ATP + CoA = acetyl-CoA + AMP + diphosphate. Its function is as follows. Catalyzes the conversion of acetate into acetyl-CoA (AcCoA), an essential intermediate at the junction of anabolic and catabolic pathways. AcsA undergoes a two-step reaction. In the first half reaction, AcsA combines acetate with ATP to form acetyl-adenylate (AcAMP) intermediate. In the second half reaction, it can then transfer the acetyl group from AcAMP to the sulfhydryl group of CoA, forming the product AcCoA. This is Acetyl-coenzyme A synthetase from Xylella fastidiosa (strain Temecula1 / ATCC 700964).